Reading from the N-terminus, the 207-residue chain is Dephospho-CoA kinase (207 aa).

In terms of domain architecture, DPCK spans 10–207 (ILGLTGGIGS…FYLTLSGGQS (198 aa)). 18–23 (GSGKSA) contributes to the ATP binding site.

Belongs to the CoaE family.

It localises to the cytoplasm. The catalysed reaction is 3'-dephospho-CoA + ATP = ADP + CoA + H(+). Its pathway is cofactor biosynthesis; coenzyme A biosynthesis; CoA from (R)-pantothenate: step 5/5. In terms of biological role, catalyzes the phosphorylation of the 3'-hydroxyl group of dephosphocoenzyme A to form coenzyme A. In Pseudomonas fluorescens (strain Pf0-1), this protein is Dephospho-CoA kinase.